Reading from the N-terminus, the 504-residue chain is Putative pentatricopeptide repeat-containing protein At3g28640 (504 aa).

PPR repeat units lie at residues 77–107, 115–149, 151–181, 182–216, 217–251, 253–287, 288–319, 320–350, and 356–390; these read NSFV…MVKE, SYLT…GVFL, DSHV…IPQP, DVVK…GLEP, DEFS…SWIE, DVFV…NVFS, WAAL…GIKP, DSVV…MEAR, and KHEH…PLAS. A type E motif region spans residues 391-470; sequence VWGALLNGCR…TPGWSVLEVD (80 aa). The tract at residues 471–501 is type E(+) motif; it reads GNVTKFVSGDVSHPNLLQIHTVIHLLSVDAL.

Belongs to the PPR family. PCMP-E subfamily.

The sequence is that of Putative pentatricopeptide repeat-containing protein At3g28640 (PCMP-E79) from Arabidopsis thaliana (Mouse-ear cress).